The following is a 346-amino-acid chain: Phenylalanine--tRNA ligase alpha subunit (346 aa).

Glu-262 serves as a coordination point for Mg(2+).

This sequence belongs to the class-II aminoacyl-tRNA synthetase family. Phe-tRNA synthetase alpha subunit type 1 subfamily. In terms of assembly, tetramer of two alpha and two beta subunits. Mg(2+) is required as a cofactor.

It is found in the cytoplasm. It carries out the reaction tRNA(Phe) + L-phenylalanine + ATP = L-phenylalanyl-tRNA(Phe) + AMP + diphosphate + H(+). The polypeptide is Phenylalanine--tRNA ligase alpha subunit (Ehrlichia chaffeensis (strain ATCC CRL-10679 / Arkansas)).